A 178-amino-acid chain; its full sequence is MERKFLTDLGLNPDQVNSIMAQYGKDMQEYEGLEAERDALKKTSSELSSKIEDLKANSANVEELTKQIEKLKSDNENATKQLNAQKLDFAVTSTIKDFGAKNAKAVKALLNHDDIRFDSKGNLIGLEDQLKSLKDSDSYLFAEDKPAGKPIQAFPTGNPVAGGKDVSLHQKIAQRLKG.

It belongs to the SPP1-like scaffolding protein family. Homodimer.

In terms of biological role, scaffolding protein involved in the icosahedric procapsid assembly. Coassembles with the capsid proteins to form the procapsid, in which the scaffolding protein is found within the external shell of icosahedrally arranged capsid protein subunits. In a subsequent step the scaffolding protein molecules are released from the procapsid. This Lactobacillus delbrueckii (Lactococcus delbrueckii bacteriophage LL-H) protein is Capsid assembly scaffolding protein (g20).